The following is an 81-amino-acid chain: Cytochrome b559 subunit alpha (81 aa).

Residues Val-21 to Trp-35 form a helical membrane-spanning segment. His-23 contributes to the heme binding site.

The protein belongs to the PsbE/PsbF family. Heterodimer of an alpha subunit and a beta subunit. PSII is composed of 1 copy each of membrane proteins PsbA, PsbB, PsbC, PsbD, PsbE, PsbF, PsbH, PsbI, PsbJ, PsbK, PsbL, PsbM, PsbT, PsbX, PsbY, PsbZ, Psb30/Ycf12, at least 3 peripheral proteins of the oxygen-evolving complex and a large number of cofactors. It forms dimeric complexes. It depends on heme b as a cofactor.

The protein resides in the plastid. The protein localises to the chloroplast thylakoid membrane. Its function is as follows. This b-type cytochrome is tightly associated with the reaction center of photosystem II (PSII). PSII is a light-driven water:plastoquinone oxidoreductase that uses light energy to abstract electrons from H(2)O, generating O(2) and a proton gradient subsequently used for ATP formation. It consists of a core antenna complex that captures photons, and an electron transfer chain that converts photonic excitation into a charge separation. The polypeptide is Cytochrome b559 subunit alpha (Mesostigma viride (Green alga)).